The primary structure comprises 414 residues: Histidinol dehydrogenase (414 aa).

NAD(+) contacts are provided by Y116, Q177, and N200. Residues T223, Q245, and H248 each contribute to the substrate site. Zn(2+) contacts are provided by Q245 and H248. Catalysis depends on proton acceptor residues E313 and H314. Substrate is bound by residues H314, D347, E401, and H406. A Zn(2+)-binding site is contributed by D347. H406 lines the Zn(2+) pocket.

It belongs to the histidinol dehydrogenase family. Zn(2+) serves as cofactor.

The enzyme catalyses L-histidinol + 2 NAD(+) + H2O = L-histidine + 2 NADH + 3 H(+). It participates in amino-acid biosynthesis; L-histidine biosynthesis; L-histidine from 5-phospho-alpha-D-ribose 1-diphosphate: step 9/9. Functionally, catalyzes the sequential NAD-dependent oxidations of L-histidinol to L-histidinaldehyde and then to L-histidine. The polypeptide is Histidinol dehydrogenase (Staphylococcus epidermidis (strain ATCC 12228 / FDA PCI 1200)).